Consider the following 1182-residue polypeptide: WD repeat-containing protein on Y chromosome (1182 aa).

WD repeat units lie at residues 155–199 (EEIT…LRSA), 323–362 (RIPL…EPSA), 366–405 (GHNG…LLQT), 456–495 (THAA…RKII), 508–547 (TIDI…VVRN), 595–635 (FHTD…RRYN), 740–779 (KTGD…IPKA), and 823–862 (GHLK…LGTL). Residues 1031 to 1182 (TKAGANLDQP…PKAKTDRETH (152 aa)) are disordered. 2 stretches are compositionally biased toward low complexity: residues 1079–1092 (GVSS…VSQG) and 1103–1121 (TTSL…PKGS).

The polypeptide is WD repeat-containing protein on Y chromosome (Drosophila virilis (Fruit fly)).